We begin with the raw amino-acid sequence, 1090 residues long: Aminopeptidase-like protein AC3.5 (1090 aa).

The Cytoplasmic segment spans residues 1-77 (MEDVDLGKDR…KPKKRIACSP (77 aa)). The span at 21–33 (GNGSASNLNNRNN) shows a compositional bias: low complexity. A disordered region spans residues 21–71 (GNGSASNLNNRNNIPLSEKAAKEPLQTQPQEAPPAPKPKVQKQKPPVKPKK). A compositionally biased stretch (basic residues) spans 59 to 71 (KVQKQKPPVKPKK). Residues 78 to 98 (GSAICLFLLAVAAIIFAAFLG) traverse the membrane as a helical; Signal-anchor for type II membrane protein segment. At 99–1090 (HYLTKQNYEM…DEMESSEEQE (992 aa)) the chain is on the lumenal side. N-linked (GlcNAc...) asparagine glycans are attached at residues asparagine 115, asparagine 123, asparagine 143, asparagine 176, and asparagine 230. The interval 217–259 (VTKRAKKSVDSGTNSTSEMPEGSGEEAMATTATTTTTESTTPV) is disordered. A compositionally biased stretch (low complexity) spans 241–257 (EEAMATTATTTTTESTT). N-linked (GlcNAc...) asparagine glycosylation is found at asparagine 402, asparagine 710, asparagine 723, asparagine 789, asparagine 894, asparagine 919, asparagine 964, and asparagine 993. Residues 1069–1080 (YLDGKMKGPAKD) show a composition bias toward basic and acidic residues. A disordered region spans residues 1069–1090 (YLDGKMKGPAKDDEMESSEEQE). The segment covering 1081-1090 (DEMESSEEQE) has biased composition (acidic residues).

This sequence belongs to the peptidase M1 family.

It is found in the membrane. The protein is Aminopeptidase-like protein AC3.5 of Caenorhabditis elegans.